A 417-amino-acid chain; its full sequence is Maltodextrin-binding protein MdxE (417 aa).

An N-terminal signal peptide occupies residues Met-1 to Ala-22. Residue Cys-23 is the site of N-palmitoyl cysteine attachment. The S-diacylglycerol cysteine moiety is linked to residue Cys-23.

This sequence belongs to the bacterial solute-binding protein 1 family. As to quaternary structure, the complex is composed of two ATP-binding proteins (MsmX), two transmembrane proteins (MdxF and MdxG) and a solute-binding protein (MdxE).

It is found in the cell membrane. With respect to regulation, inhibited by glucose and lactose. In terms of biological role, part of the ABC transporter complex involved in maltodextrin import. Binds maltodextrin. Can also bind maltose with low affinity, but is not involved in its uptake. In Bacillus subtilis (strain 168), this protein is Maltodextrin-binding protein MdxE (mdxE).